A 72-amino-acid chain; its full sequence is Translation initiation factor IF-1 (72 aa).

Positions 1 to 72 (MSKEDMIEFS…TKGRITFRFK (72 aa)) constitute an S1-like domain.

The protein belongs to the IF-1 family. In terms of assembly, component of the 30S ribosomal translation pre-initiation complex which assembles on the 30S ribosome in the order IF-2 and IF-3, IF-1 and N-formylmethionyl-tRNA(fMet); mRNA recruitment can occur at any time during PIC assembly.

The protein resides in the cytoplasm. Its function is as follows. One of the essential components for the initiation of protein synthesis. Stabilizes the binding of IF-2 and IF-3 on the 30S subunit to which N-formylmethionyl-tRNA(fMet) subsequently binds. Helps modulate mRNA selection, yielding the 30S pre-initiation complex (PIC). Upon addition of the 50S ribosomal subunit IF-1, IF-2 and IF-3 are released leaving the mature 70S translation initiation complex. This is Translation initiation factor IF-1 from Acidiphilium cryptum (strain JF-5).